Consider the following 321-residue polypeptide: Glycerol-3-phosphate dehydrogenase [NAD(P)+] (321 aa).

5 residues coordinate NADPH: Ser10, Phe11, Arg31, Arg32, and Lys104. Residues Lys104 and Gly132 each coordinate sn-glycerol 3-phosphate. Ala136 is an NADPH binding site. Residues Lys186, Asp238, Ser248, Arg249, and Asn250 each contribute to the sn-glycerol 3-phosphate site. Lys186 acts as the Proton acceptor in catalysis. An NADPH-binding site is contributed by Arg249. NADPH is bound at residue Glu272.

It belongs to the NAD-dependent glycerol-3-phosphate dehydrogenase family.

It localises to the cytoplasm. The catalysed reaction is sn-glycerol 3-phosphate + NAD(+) = dihydroxyacetone phosphate + NADH + H(+). The enzyme catalyses sn-glycerol 3-phosphate + NADP(+) = dihydroxyacetone phosphate + NADPH + H(+). Its function is as follows. Catalyzes the reduction of the glycolytic intermediate dihydroxyacetone phosphate (DHAP) to sn-glycerol 3-phosphate (G3P). This Methanothermobacter thermautotrophicus (strain ATCC 29096 / DSM 1053 / JCM 10044 / NBRC 100330 / Delta H) (Methanobacterium thermoautotrophicum) protein is Glycerol-3-phosphate dehydrogenase [NAD(P)+].